Consider the following 175-residue polypeptide: RNA pyrophosphohydrolase (175 aa).

The region spanning 6–149 (GYRPNVGIVI…KRDVYRRVMK (144 aa)) is the Nudix hydrolase domain. Positions 38–59 (GGINPGETAEQAMYRELFEEVG) match the Nudix box motif.

Belongs to the Nudix hydrolase family. RppH subfamily. A divalent metal cation is required as a cofactor.

Accelerates the degradation of transcripts by removing pyrophosphate from the 5'-end of triphosphorylated RNA, leading to a more labile monophosphorylated state that can stimulate subsequent ribonuclease cleavage. The chain is RNA pyrophosphohydrolase from Serratia proteamaculans (strain 568).